We begin with the raw amino-acid sequence, 108 residues long: Translation initiation factor 1A (108 aa).

In terms of domain architecture, S1-like spans 11–85 (PSKDVPKPEE…TKADIVYRYM (75 aa)).

This sequence belongs to the eIF-1A family.

Seems to be required for maximal rate of protein biosynthesis. Enhances ribosome dissociation into subunits and stabilizes the binding of the initiator Met-tRNA(I) to 40 S ribosomal subunits. The chain is Translation initiation factor 1A (eIF1A) from Metallosphaera sedula (strain ATCC 51363 / DSM 5348 / JCM 9185 / NBRC 15509 / TH2).